Reading from the N-terminus, the 313-residue chain is Olfactory receptor 4Q3 (313 aa).

Residues 1–25 are Extracellular-facing; the sequence is MKKEQDSNVTEFVLLGLSSSWELQL. N8 carries N-linked (GlcNAc...) asparagine glycosylation. A helical membrane pass occupies residues 26-49; sequence FLFLLFLFFYIAIVLGNLLIVVTV. Topologically, residues 50–58 are cytoplasmic; sequence QAHAHLLQS. A helical membrane pass occupies residues 59-80; the sequence is PMYYFLGHLSFIDLCLSCVTVP. Topologically, residues 81–101 are extracellular; the sequence is KMLGDFLQQGKSISFSGCLAQ. A disulfide bond links C98 and C190. A helical transmembrane segment spans residues 102 to 121; sequence IYFLHFLGASEMFLLTVMAY. Over 122–140 the chain is Cytoplasmic; the sequence is DRYVAICNPLRYLTVMNPQ. Residues 141–159 traverse the membrane as a helical segment; it reads LCLWLVLACWCGGFIHSIM. Topologically, residues 160 to 196 are extracellular; that stretch reads QVILVIQLPFCGPNELDNFYCDVPQVIKLACMDTYVV. The chain crosses the membrane as a helical span at residues 197 to 220; that stretch reads EVLVIANSGLLSLVCFLVLLFSYA. Residues 221–236 are Cytoplasmic-facing; that stretch reads IILITLRTHFCQGQNK. The chain crosses the membrane as a helical span at residues 237 to 259; it reads VFSTCASHLTVVSLIFVPCVFIY. The Extracellular segment spans residues 260 to 270; that stretch reads LRPFCSFSVDK. A helical transmembrane segment spans residues 271 to 290; sequence IFSLFYTVITPMLNPLIYTL. The Cytoplasmic portion of the chain corresponds to 291-313; sequence RNTDMKTAMKKLRIKPCGIPLPC.

Belongs to the G-protein coupled receptor 1 family.

It is found in the cell membrane. Functionally, odorant receptor. This is Olfactory receptor 4Q3 (OR4Q3) from Homo sapiens (Human).